Consider the following 282-residue polypeptide: Phosphatidylserine decarboxylase proenzyme (282 aa).

Catalysis depends on charge relay system; for autoendoproteolytic cleavage activity residues Asp-89, His-145, and Ser-249. The active-site Schiff-base intermediate with substrate; via pyruvic acid; for decarboxylase activity is the Ser-249. Ser-249 is subject to Pyruvic acid (Ser); by autocatalysis.

The protein belongs to the phosphatidylserine decarboxylase family. PSD-B subfamily. Prokaryotic type I sub-subfamily. As to quaternary structure, heterodimer of a large membrane-associated beta subunit and a small pyruvoyl-containing alpha subunit. Requires pyruvate as cofactor. Post-translationally, is synthesized initially as an inactive proenzyme. Formation of the active enzyme involves a self-maturation process in which the active site pyruvoyl group is generated from an internal serine residue via an autocatalytic post-translational modification. Two non-identical subunits are generated from the proenzyme in this reaction, and the pyruvate is formed at the N-terminus of the alpha chain, which is derived from the carboxyl end of the proenzyme. The autoendoproteolytic cleavage occurs by a canonical serine protease mechanism, in which the side chain hydroxyl group of the serine supplies its oxygen atom to form the C-terminus of the beta chain, while the remainder of the serine residue undergoes an oxidative deamination to produce ammonia and the pyruvoyl prosthetic group on the alpha chain. During this reaction, the Ser that is part of the protease active site of the proenzyme becomes the pyruvoyl prosthetic group, which constitutes an essential element of the active site of the mature decarboxylase.

The protein resides in the cell membrane. The enzyme catalyses a 1,2-diacyl-sn-glycero-3-phospho-L-serine + H(+) = a 1,2-diacyl-sn-glycero-3-phosphoethanolamine + CO2. Its pathway is phospholipid metabolism; phosphatidylethanolamine biosynthesis; phosphatidylethanolamine from CDP-diacylglycerol: step 2/2. In terms of biological role, catalyzes the formation of phosphatidylethanolamine (PtdEtn) from phosphatidylserine (PtdSer). This chain is Phosphatidylserine decarboxylase proenzyme, found in Anaeromyxobacter sp. (strain K).